Here is a 432-residue protein sequence, read N- to C-terminus: Small ribosomal subunit protein uS5m (432 aa).

A disordered region spans residues 110–130 (AGARKGRGKRTKKKKRKDLNR). Positions 113-127 (RKGRGKRTKKKKRKD) are enriched in basic residues. The region spanning 220–284 (FDTRILEVRN…NRAIHYLHYI (65 aa)) is the S5 DRBM domain.

This sequence belongs to the universal ribosomal protein uS5 family. In terms of assembly, component of the mitochondrial ribosome small subunit (28S) which comprises a 12S rRNA and about 30 distinct proteins.

Its subcellular location is the mitochondrion. This is Small ribosomal subunit protein uS5m (Mrps5) from Mus musculus (Mouse).